Reading from the N-terminus, the 138-residue chain is Small ribosomal subunit protein uS11 (138 aa).

Residues 1-12 are compositionally biased toward polar residues; that stretch reads MAKQSAKGSTTT. The segment at 1–37 is disordered; the sequence is MAKQSAKGSTTTKRQRGKRREKKNVPRGQAHIQSTFN. Over residues 13–22 the composition is skewed to basic residues; it reads KRQRGKRREK.

Belongs to the universal ribosomal protein uS11 family. In terms of assembly, part of the 30S ribosomal subunit. Interacts with proteins S7 and S18. Binds to IF-3.

In terms of biological role, located on the platform of the 30S subunit, it bridges several disparate RNA helices of the 16S rRNA. Forms part of the Shine-Dalgarno cleft in the 70S ribosome. This Roseiflexus castenholzii (strain DSM 13941 / HLO8) protein is Small ribosomal subunit protein uS11.